The chain runs to 122 residues: Large ribosomal subunit protein uL14 (122 aa).

It belongs to the universal ribosomal protein uL14 family. As to quaternary structure, part of the 50S ribosomal subunit. Forms a cluster with proteins L3 and L19. In the 70S ribosome, L14 and L19 interact and together make contacts with the 16S rRNA in bridges B5 and B8.

Functionally, binds to 23S rRNA. Forms part of two intersubunit bridges in the 70S ribosome. The sequence is that of Large ribosomal subunit protein uL14 from Bifidobacterium longum (strain DJO10A).